A 489-amino-acid polypeptide reads, in one-letter code: RNA polymerase II subunit 5-mediating protein homolog (489 aa).

4 disordered regions span residues 141 to 188 (NSDE…MDEE), 200 to 329 (EEKE…EEDE), 396 to 415 (ILKT…SYNE), and 434 to 489 (FENQ…RQNK). The segment covering 157-168 (QKSTTTTTTTTT) has biased composition (low complexity). 2 stretches are compositionally biased toward basic and acidic residues: residues 169-188 (SKDK…MDEE) and 215-224 (FNKKFNKKLD). 3 stretches are compositionally biased toward acidic residues: residues 227–265 (GSDE…EDEK), 276–298 (EEDD…EYYD), and 315–329 (QGDD…EEDE). Residues 396–413 (ILKTNSSGNLMSTIPKSY) show a composition bias toward polar residues. Residues 480 to 489 (SRFKSSRQNK) show a composition bias toward basic residues.

Belongs to the RNA polymerase II subunit 5-mediating protein family.

The protein resides in the nucleus. In Dictyostelium discoideum (Social amoeba), this protein is RNA polymerase II subunit 5-mediating protein homolog (rmp).